We begin with the raw amino-acid sequence, 173 residues long: MTYFVVFLGLCFVLGGLAVASNPSPYYGVVGLVLASVVGCGWLLSLGVSFVSLVLFMVYLGGMLVVFVYSVSLAADPFPEAWGDWGVVGYGASFVVVLMVGGVIGGFVGGWDFGVVTVDSVGVFSARLDFSGVAMFYSCGVGMFLVAGWGLVLTLFVVLELVRGLSRGAIRAV.

Transmembrane regions (helical) follow at residues 1-21, 27-47, 48-68, 87-107, and 139-159; these read MTYF…AVAS, YGVV…LSLG, VSFV…VVFV, VVGY…IGGF, and CGVG…FVVL.

Belongs to the complex I subunit 6 family.

It localises to the mitochondrion membrane. The catalysed reaction is a ubiquinone + NADH + 5 H(+)(in) = a ubiquinol + NAD(+) + 4 H(+)(out). Its function is as follows. Core subunit of the mitochondrial membrane respiratory chain NADH dehydrogenase (Complex I) that is believed to belong to the minimal assembly required for catalysis. Complex I functions in the transfer of electrons from NADH to the respiratory chain. The immediate electron acceptor for the enzyme is believed to be ubiquinone. The polypeptide is NADH-ubiquinone oxidoreductase chain 6 (MT-ND6) (Cepphus columba (Pigeon guillemot)).